The chain runs to 446 residues: Deoxyguanosinetriphosphate triphosphohydrolase-like protein (446 aa).

Residues 1 to 28 (MSSSVWQERRHGEDKQRRNDHRSPFQRD) are disordered. The span at 7-28 (QERRHGEDKQRRNDHRSPFQRD) shows a compositional bias: basic and acidic residues. One can recognise an HD domain in the interval 59-252 (RLTHSLEVSQ…MELADDIAYA (194 aa)).

Belongs to the dGTPase family. Type 2 subfamily.

The polypeptide is Deoxyguanosinetriphosphate triphosphohydrolase-like protein (Shewanella sp. (strain ANA-3)).